The sequence spans 428 residues: 3-phosphoshikimate 1-carboxyvinyltransferase (428 aa).

3-phosphoshikimate is bound by residues K21, S22, and R26. K21 contributes to the phosphoenolpyruvate binding site. Residues G94 and R122 each coordinate phosphoenolpyruvate. Residues S166, S167, Q168, S194, D306, and K333 each coordinate 3-phosphoshikimate. Residue Q168 participates in phosphoenolpyruvate binding. The active-site Proton acceptor is D306. Positions 337, 379, and 405 each coordinate phosphoenolpyruvate.

It belongs to the EPSP synthase family. In terms of assembly, monomer.

Its subcellular location is the cytoplasm. It catalyses the reaction 3-phosphoshikimate + phosphoenolpyruvate = 5-O-(1-carboxyvinyl)-3-phosphoshikimate + phosphate. It participates in metabolic intermediate biosynthesis; chorismate biosynthesis; chorismate from D-erythrose 4-phosphate and phosphoenolpyruvate: step 6/7. In terms of biological role, catalyzes the transfer of the enolpyruvyl moiety of phosphoenolpyruvate (PEP) to the 5-hydroxyl of shikimate-3-phosphate (S3P) to produce enolpyruvyl shikimate-3-phosphate and inorganic phosphate. The sequence is that of 3-phosphoshikimate 1-carboxyvinyltransferase from Clostridium acetobutylicum (strain ATCC 824 / DSM 792 / JCM 1419 / IAM 19013 / LMG 5710 / NBRC 13948 / NRRL B-527 / VKM B-1787 / 2291 / W).